The sequence spans 764 residues: 5-methyltetrahydropteroyltriglutamate--homocysteine methyltransferase (764 aa).

5-methyltetrahydropteroyltri-L-glutamate is bound by residues 16–19 (RELK) and Lys115. Residues 435 to 437 (IGS) and Glu488 each bind L-homocysteine. L-methionine-binding positions include 435–437 (IGS) and Glu488. 5-methyltetrahydropteroyltri-L-glutamate is bound by residues 519-520 (RC) and Trp565. Asp603 provides a ligand contact to L-homocysteine. Asp603 serves as a coordination point for L-methionine. A 5-methyltetrahydropteroyltri-L-glutamate-binding site is contributed by Glu609. The Zn(2+) site is built by His645, Cys647, and Glu669. The active-site Proton donor is His698. Position 730 (Cys730) interacts with Zn(2+).

This sequence belongs to the vitamin-B12 independent methionine synthase family. The cofactor is Zn(2+).

The catalysed reaction is 5-methyltetrahydropteroyltri-L-glutamate + L-homocysteine = tetrahydropteroyltri-L-glutamate + L-methionine. It functions in the pathway amino-acid biosynthesis; L-methionine biosynthesis via de novo pathway; L-methionine from L-homocysteine (MetE route): step 1/1. Catalyzes the transfer of a methyl group from 5-methyltetrahydrofolate to homocysteine resulting in methionine formation. The sequence is that of 5-methyltetrahydropteroyltriglutamate--homocysteine methyltransferase from Burkholderia mallei (strain NCTC 10247).